Here is a 245-residue protein sequence, read N- to C-terminus: 1-(5-phosphoribosyl)-5-[(5-phosphoribosylamino)methylideneamino] imidazole-4-carboxamide isomerase (245 aa).

Asp-7 acts as the Proton acceptor in catalysis. Asp-129 serves as the catalytic Proton donor.

Belongs to the HisA/HisF family.

The protein resides in the cytoplasm. The catalysed reaction is 1-(5-phospho-beta-D-ribosyl)-5-[(5-phospho-beta-D-ribosylamino)methylideneamino]imidazole-4-carboxamide = 5-[(5-phospho-1-deoxy-D-ribulos-1-ylimino)methylamino]-1-(5-phospho-beta-D-ribosyl)imidazole-4-carboxamide. Its pathway is amino-acid biosynthesis; L-histidine biosynthesis; L-histidine from 5-phospho-alpha-D-ribose 1-diphosphate: step 4/9. This Shewanella piezotolerans (strain WP3 / JCM 13877) protein is 1-(5-phosphoribosyl)-5-[(5-phosphoribosylamino)methylideneamino] imidazole-4-carboxamide isomerase.